A 183-amino-acid polypeptide reads, in one-letter code: Protein Syd (183 aa).

The protein belongs to the Syd family.

It localises to the cell inner membrane. Interacts with the SecY protein in vivo. May bind preferentially to an uncomplexed state of SecY, thus functioning either as a chelating agent for excess SecY in the cell or as a regulatory factor that negatively controls the translocase function. This chain is Protein Syd, found in Aliivibrio fischeri (strain MJ11) (Vibrio fischeri).